The following is a 401-amino-acid chain: Riboflavin biosynthesis protein RibBA (401 aa).

A DHBP synthase region spans residues 1–203 (MTDFQFSKVE…IQQLQEYRRK (203 aa)). D-ribulose 5-phosphate-binding positions include 30–31 (RE), aspartate 35, 142–146 (RNGHT), and glutamate 166. Glutamate 31 contributes to the Mg(2+) binding site. A Mg(2+)-binding site is contributed by histidine 145. The segment at 204-401 (HDSLVKQISV…QIKMGHMFNF (198 aa)) is GTP cyclohydrolase II. 254-258 (RIHSE) contributes to the GTP binding site. 3 residues coordinate Zn(2+): cysteine 259, cysteine 270, and cysteine 272. GTP is bound by residues glutamine 275, 297–299 (EGR), and threonine 319. Aspartate 331 (proton acceptor; for GTP cyclohydrolase activity) is an active-site residue. Arginine 333 (nucleophile; for GTP cyclohydrolase activity) is an active-site residue. The GTP site is built by threonine 354 and lysine 359.

In the N-terminal section; belongs to the DHBP synthase family. This sequence in the C-terminal section; belongs to the GTP cyclohydrolase II family. Mg(2+) serves as cofactor. The cofactor is Mn(2+). Requires Zn(2+) as cofactor.

It carries out the reaction D-ribulose 5-phosphate = (2S)-2-hydroxy-3-oxobutyl phosphate + formate + H(+). It catalyses the reaction GTP + 4 H2O = 2,5-diamino-6-hydroxy-4-(5-phosphoribosylamino)-pyrimidine + formate + 2 phosphate + 3 H(+). It functions in the pathway cofactor biosynthesis; riboflavin biosynthesis; 2-hydroxy-3-oxobutyl phosphate from D-ribulose 5-phosphate: step 1/1. Its pathway is cofactor biosynthesis; riboflavin biosynthesis; 5-amino-6-(D-ribitylamino)uracil from GTP: step 1/4. Catalyzes the conversion of D-ribulose 5-phosphate to formate and 3,4-dihydroxy-2-butanone 4-phosphate. Its function is as follows. Catalyzes the conversion of GTP to 2,5-diamino-6-ribosylamino-4(3H)-pyrimidinone 5'-phosphate (DARP), formate and pyrophosphate. This chain is Riboflavin biosynthesis protein RibBA, found in Actinobacillus pleuropneumoniae serotype 7 (strain AP76).